The chain runs to 501 residues: L-aspartate decarboxylase dtxS4 (501 aa).

106–108 (KLT) is a substrate binding site. An N6-(pyridoxal phosphate)lysine modification is found at lysine 320. Residue arginine 474 participates in substrate binding.

Belongs to the group II decarboxylase family. The cofactor is pyridoxal 5'-phosphate.

It carries out the reaction L-aspartate + H(+) = beta-alanine + CO2. The protein operates within secondary metabolite biosynthesis. In terms of biological role, L-aspartate decarboxylase; part of the gene cluster that mediates the biosynthesis of destruxins, insecticidal cyclic hexadepsipeptides which induce flaccid paralysis and visceral muscle contraction in insects through targeting the calcium channels and vacuolar-type ATPases. The aldo-keto reductase dtxS3 converts alpha-ketoisocaproic acid from deaminated leucine into alpha-hydroxyisocaproic acid (HIC), which is the first substrate for destruxin assembly by dtxS1. L-aspartate decarboxylase dtxS4 converts aspartic acid into beta-alanine, the last substrate for the destruxin assembly line performed by dtxS1. The nonribosomal peptide synthetase dtxS1 synthesizes destruxins B and B2, whereas the cytochrome P450 monooxygenase dtxS2 is required to convert destruxin B into other destruxin derivatives, including destructins C, D, A and E. Destruxin E-diol (ED) is further produced in a non-enzymatic manner from destruxin E. Destruxins play an important role in virulence and escape from insect host immune defenses. This Metarhizium robertsii (strain ARSEF 23 / ATCC MYA-3075) (Metarhizium anisopliae (strain ARSEF 23)) protein is L-aspartate decarboxylase dtxS4.